The following is an 892-amino-acid chain: DNA mismatch repair protein MutS (892 aa).

ATP is bound at residue Gly-607–Ser-614. The disordered stretch occupies residues Glu-833–Asp-855. Residues Ser-845–Asp-855 are compositionally biased toward basic and acidic residues.

This sequence belongs to the DNA mismatch repair MutS family.

This protein is involved in the repair of mismatches in DNA. It is possible that it carries out the mismatch recognition step. This protein has a weak ATPase activity. The polypeptide is DNA mismatch repair protein MutS (Bacillus anthracis (strain A0248)).